A 105-amino-acid polypeptide reads, in one-letter code: Large ribosomal subunit protein uL24 (105 aa).

The interval Met-1–Ser-25 is disordered.

The protein belongs to the universal ribosomal protein uL24 family. As to quaternary structure, part of the 50S ribosomal subunit.

Its function is as follows. One of two assembly initiator proteins, it binds directly to the 5'-end of the 23S rRNA, where it nucleates assembly of the 50S subunit. Functionally, one of the proteins that surrounds the polypeptide exit tunnel on the outside of the subunit. The chain is Large ribosomal subunit protein uL24 from Staphylococcus saprophyticus subsp. saprophyticus (strain ATCC 15305 / DSM 20229 / NCIMB 8711 / NCTC 7292 / S-41).